The sequence spans 605 residues: Protein Spindly (605 aa).

An N-acetylmethionine modification is found at methionine 1. Residues threonine 3 to glutamate 442 adopt a coiled-coil conformation. Phosphoserine is present on residues serine 513, serine 515, and serine 555. Residues leucine 545–glutamate 581 are disordered. A compositionally biased stretch (basic and acidic residues) spans leucine 564 to glutamate 581.

Belongs to the Spindly family. In terms of assembly, interacts with KNTC1 and ZW10. These interactions appear weak and may be transient or indirect. Interacts with dynein intermediate chain and dynactin (DCTN1). Interacts with the catalytically active form of USP45. Post-translationally, monoubiquitinated with'Lys-48' linkage. Deubiquitinated by USP45.

It is found in the cytoplasm. The protein localises to the cytoskeleton. The protein resides in the microtubule organizing center. Its subcellular location is the centrosome. It localises to the chromosome. It is found in the centromere. The protein localises to the kinetochore. The protein resides in the nucleus. Its subcellular location is the spindle pole. Required for the localization of dynein and dynactin to the mitotic kintochore. Dynein is believed to control the initial lateral interaction between the kinetochore and spindle microtubules and to facilitate the subsequent formation of end-on kinetochore-microtubule attachments mediated by the NDC80 complex. Also required for correct spindle orientation. Does not appear to be required for the removal of spindle assembly checkpoint (SAC) proteins from the kinetochore upon bipolar spindle attachment. Acts as an adapter protein linking the dynein motor complex to various cargos and converts dynein from a non-processive to a highly processive motor in the presence of dynactin. Facilitates the interaction between dynein and dynactin and activates dynein processivity (the ability to move along a microtubule for a long distance without falling off the track). Plays a role in cell migration. This is Protein Spindly from Macaca fascicularis (Crab-eating macaque).